Reading from the N-terminus, the 206-residue chain is Holliday junction branch migration complex subunit RuvA (206 aa).

The segment at 1-63 (MIASLRGTVI…EDAMKLYGFI (63 aa)) is domain I. Residues 64–142 (DNESREMFSV…AFAAGVVDEG (79 aa)) are domain II. The interval 143-153 (GEQISLPNANI) is flexible linker. The segment at 154-206 (ASEVVVEQVSQALVGLGFSEKQSDDAVSFVLAADPSLDTSGALRAALAKLSGK) is domain III.

It belongs to the RuvA family. As to quaternary structure, homotetramer. Forms an RuvA(8)-RuvB(12)-Holliday junction (HJ) complex. HJ DNA is sandwiched between 2 RuvA tetramers; dsDNA enters through RuvA and exits via RuvB. An RuvB hexamer assembles on each DNA strand where it exits the tetramer. Each RuvB hexamer is contacted by two RuvA subunits (via domain III) on 2 adjacent RuvB subunits; this complex drives branch migration. In the full resolvosome a probable DNA-RuvA(4)-RuvB(12)-RuvC(2) complex forms which resolves the HJ.

It localises to the cytoplasm. Functionally, the RuvA-RuvB-RuvC complex processes Holliday junction (HJ) DNA during genetic recombination and DNA repair, while the RuvA-RuvB complex plays an important role in the rescue of blocked DNA replication forks via replication fork reversal (RFR). RuvA specifically binds to HJ cruciform DNA, conferring on it an open structure. The RuvB hexamer acts as an ATP-dependent pump, pulling dsDNA into and through the RuvAB complex. HJ branch migration allows RuvC to scan DNA until it finds its consensus sequence, where it cleaves and resolves the cruciform DNA. The protein is Holliday junction branch migration complex subunit RuvA of Corynebacterium glutamicum (strain ATCC 13032 / DSM 20300 / JCM 1318 / BCRC 11384 / CCUG 27702 / LMG 3730 / NBRC 12168 / NCIMB 10025 / NRRL B-2784 / 534).